A 113-amino-acid chain; its full sequence is Hydrogenase maturation factor HypA (113 aa).

His-2 serves as a coordination point for Ni(2+). 4 residues coordinate Zn(2+): Cys-73, Cys-76, Cys-89, and Cys-92.

Belongs to the HypA/HybF family.

In terms of biological role, involved in the maturation of [NiFe] hydrogenases. Required for nickel insertion into the metal center of the hydrogenase. This Rhodopseudomonas palustris (strain TIE-1) protein is Hydrogenase maturation factor HypA.